The primary structure comprises 379 residues: Anhydro-N-acetylmuramic acid kinase (379 aa).

Residue G12 to D19 participates in ATP binding.

This sequence belongs to the anhydro-N-acetylmuramic acid kinase family.

It catalyses the reaction 1,6-anhydro-N-acetyl-beta-muramate + ATP + H2O = N-acetyl-D-muramate 6-phosphate + ADP + H(+). Its pathway is amino-sugar metabolism; 1,6-anhydro-N-acetylmuramate degradation. It functions in the pathway cell wall biogenesis; peptidoglycan recycling. In terms of biological role, catalyzes the specific phosphorylation of 1,6-anhydro-N-acetylmuramic acid (anhMurNAc) with the simultaneous cleavage of the 1,6-anhydro ring, generating MurNAc-6-P. Is required for the utilization of anhMurNAc either imported from the medium or derived from its own cell wall murein, and thus plays a role in cell wall recycling. The polypeptide is Anhydro-N-acetylmuramic acid kinase (Gloeobacter violaceus (strain ATCC 29082 / PCC 7421)).